Here is a 501-residue protein sequence, read N- to C-terminus: MAINAQEISALIKKQIEDFQPNFDVTETGIVTYIGDGIARARGLDNAMSGELLEFSNGAYGMAQNLESNDVGIIILGDFSEIREGDVVKRTGKIMEVPVGEAMIGRVVNPLGQPVDGLGEIETTATRPVETPAPGVMQRKSVFEPLQTGLKAIDALVPIGRGQRELIIGDRQTGKTSVAIDAILNQKGQDMICIYVAIGQKESTVRTQVETLRKYGALDYTIVVTASASQPSPLLFIAPYAGVAMAEEFMYNGKHVLIVYDDLSKQAVAYRELSLLLRRPPGREAYPGDVFYLHSRLLERSAKLSDALGGGSITALPFIETQAGDISAYIATNVISITDGQIFLQENLFNSGIRPAIDAGSSVSRVGGAAQIKAMKRVAGTLRLDLASYRELEAFTQFGSDLDAATQAKLNRGRRTVEVLKQPLHKPLPVEKQVVILYALTHGFLDDVPVNDILAFEEALYDYFDAHYDNLFETIRTTKDLPEEAELDAAIQAFKDQSQFK.

169–176 (GDRQTGKT) is a binding site for ATP.

Belongs to the ATPase alpha/beta chains family. In terms of assembly, F-type ATPases have 2 components, CF(1) - the catalytic core - and CF(0) - the membrane proton channel. CF(1) has five subunits: alpha(3), beta(3), gamma(1), delta(1), epsilon(1). CF(0) has three main subunits: a(1), b(2) and c(9-12). The alpha and beta chains form an alternating ring which encloses part of the gamma chain. CF(1) is attached to CF(0) by a central stalk formed by the gamma and epsilon chains, while a peripheral stalk is formed by the delta and b chains.

The protein localises to the cell membrane. The catalysed reaction is ATP + H2O + 4 H(+)(in) = ADP + phosphate + 5 H(+)(out). In terms of biological role, produces ATP from ADP in the presence of a proton gradient across the membrane. The alpha chain is a regulatory subunit. The protein is ATP synthase subunit alpha of Streptococcus agalactiae serotype III (strain NEM316).